The sequence spans 423 residues: MGNTVAMILAGGQGTRLGVLTERIAKPAVPFGGKYRLIDFTLSNCVNSGIYRVGVLTQYRPHVLSKHIGIGRPWDLDRKDGGVEILPPYVGRHESDWYKGTANAVYQNLEFLEENDAELVLILSGDHVYAMNYNDLIDYHLLKEADGTIACMEVPIEEASRFGIMITDVDGRIVDFEEKPAKPRSNLASLGIYVFNYEFLKKVLIEDENDPNSSHDFGKDVIPRILRENLGSLYAFRFDGYWRDVGTLRSYWEANLELVLPVPPFNLYDPNWRFFTHTEEMPPAYVAPGSKVSTSLVSEGAEVYGNVFNSVIFQGVKIGRGTVVKNSVIMTRTEIGENCYLENVIIAENVKVGNNVRMGVGEDAESKLDPKVYSGLLTVVGMNSVIPDDMVIGKNCVIGIGVRPEDFKSKTLESGDYVIVREE.

Alpha-D-glucose 1-phosphate-binding positions include Y98, G163, 178-179, and S189; that span reads EK.

This sequence belongs to the bacterial/plant glucose-1-phosphate adenylyltransferase family. In terms of assembly, homotetramer.

The catalysed reaction is alpha-D-glucose 1-phosphate + ATP + H(+) = ADP-alpha-D-glucose + diphosphate. Its pathway is glycan biosynthesis; glycogen biosynthesis. In terms of biological role, involved in the biosynthesis of ADP-glucose, a building block required for the elongation reactions to produce glycogen. Catalyzes the reaction between ATP and alpha-D-glucose 1-phosphate (G1P) to produce pyrophosphate and ADP-Glc. The polypeptide is Glucose-1-phosphate adenylyltransferase (Thermotoga sp. (strain RQ2)).